The following is a 171-amino-acid chain: MECDRISTLPDHLVAKIVSYLGIKDSIKTSVLSKRWEFVWLKVVGLDLKNCDFPPNGIASQMVVNKYMEFNSGLHMQYFKVNFGGNTVCTNRFLEWIATAVDRGVQHLDAENKNPVIIKEFMPKKIYKSKTLVSLKLAIKIFLKARHFISVFIVLQGQSIVQFSSRCGTFS.

The 47-residue stretch at 3-49 folds into the F-box domain; sequence CDRISTLPDHLVAKIVSYLGIKDSIKTSVLSKRWEFVWLKVVGLDLK.

This chain is Putative F-box protein At1g32020, found in Arabidopsis thaliana (Mouse-ear cress).